A 459-amino-acid polypeptide reads, in one-letter code: MHNIHRRHFLKAAGAVTAGLITANITASTHANSVAPKPQTGKSVIGLIAPKMDVVRVGFIGVGERGFSHVEQFCHLEGVELKAICDTHQAVIDRAVAHIAKQNRPQPTVYTGDDLSYRDLLSRDDIDIVIISTPWEWHAPMAIETMESGKHAFVEVPLALTVEECWQIVDTAERTQKNCMMMENVNYGREELMVLNMVRQGVFGELLHGEAAYIHELRWQMKEIDHKTGSWRTYWHTKRNGNLYPTHGLGPVSQYMNINRGDRFDYLTSMSSPALGRALYAKREFPADHERNQLKYINGDINTSLIKTVKGRTIMVQHDTTTPRPYSRHNLIQGTNGVFAGFPNRIAVEHGGFGKSYHEWDMDMQKWYDKYDHPLWQRIGKEAEINGGHGGMDFVMLWRMIYCLRNGEALDQDVYDAASWSVVNILSEQSVNNRSNSVTFPDFTRGAWEHAKPLGIVGA.

Residues 1 to 31 (MHNIHRRHFLKAAGAVTAGLITANITASTHA) constitute a signal peptide (tat-type signal). NAD(+) contacts are provided by residues 64–65 (ER), Asp-86, 135–138 (WEWH), 155–156 (EV), and Asn-184. Residues Tyr-213, Arg-232, 244 to 247 (YPTH), and Tyr-326 each bind substrate. Tyr-244 is an NAD(+) binding site.

It belongs to the Gfo/Idh/MocA family. Glycosyl hydrolase 109 subfamily. The cofactor is NAD(+). In terms of processing, predicted to be exported by the Tat system. The position of the signal peptide cleavage has not been experimentally proven.

Functionally, glycosidase. The sequence is that of Glycosyl hydrolase family 109 protein from Shewanella sp. (strain W3-18-1).